A 456-amino-acid polypeptide reads, in one-letter code: Anthocyanidin 3-O-glucosyltransferase UFGT (456 aa).

A kaempferol-binding site is contributed by Ser-18. Ser-18 contributes to the quercetin binding site. Position 19 (Thr-19) interacts with UDP. Thr-19 serves as a coordination point for UDP-alpha-D-glucose. 2 residues coordinate kaempferol: His-20 and Gln-84. His-20 (proton acceptor) is an active-site residue. Gln-84 contacts quercetin. Asp-119 serves as the catalytic Charge relay. UDP-alpha-D-glucose is bound at residue Thr-141. The kaempferol site is built by His-150 and Gln-188. Positions 150 and 188 each coordinate quercetin. UDP-binding residues include Thr-280, Ser-306, Trp-332, Ala-333, and His-350. UDP-alpha-D-glucose-binding residues include Thr-280, Ser-306, Trp-332, Ala-333, His-350, Trp-353, Asn-354, Ser-355, and Glu-358. Positions 354, 355, and 358 each coordinate UDP. Gly-373 is a binding site for quercetin. The UDP-alpha-D-glucose site is built by Asp-374 and Gln-375.

The protein belongs to the UDP-glycosyltransferase family. Detected only in berry skin.

The catalysed reaction is an anthocyanidin + UDP-alpha-D-glucose + H(+) = an anthocyanidin 3-O-beta-D-glucoside + UDP. It catalyses the reaction cyanidin + UDP-alpha-D-glucose = cyanidin 3-O-beta-D-glucoside + UDP + H(+). It carries out the reaction delphinidin + UDP-alpha-D-glucose = delphinidin 3-O-beta-D-glucoside + UDP. The enzyme catalyses peonidin + UDP-alpha-D-glucose = peonidin 3-O-beta-D-glucoside + UDP. The catalysed reaction is pelargonidin + UDP-alpha-D-glucose = pelargonidin 3-O-beta-D-glucoside + UDP. It catalyses the reaction malvidin + UDP-alpha-D-glucose = malvidin 3-O-beta-D-glucoside + UDP. It carries out the reaction a flavonol + UDP-alpha-D-glucose = a flavonol 3-O-beta-D-glucoside + UDP + H(+). It participates in pigment biosynthesis; anthocyanin biosynthesis. Its activity is regulated as follows. Inhibited by Mn(2+) and Zn(2+). In the presence of other necessary color factors, this glycosylation reaction allows the accumulation of anthocyanin pigments. Involved in the formation of red wine pigments. UDP-glucose (UDP-Glc) is the physiological sugar donor, and cyanidin is the natural acceptor in vivo. Can glucosylate the anthocyanidins delphinidin, peonidin, pelargonidin and malvidin. The flavonols quercitin and kaempferol can also be glucosylated in vitro, but with glucosylation rates 50-100 times lower than cyanidin. In vitro, can use UDP-Glc, UDP-5SGlc, UDP-Xyl, UDP-Man, UDP-Gal, UDP-GlcNAc, GDP-Glc, dTDP-Glc and dTDP-Xyl as sugar donors, but not UDP-6OMeGal, UDP-Ara, UDP-6FGal, UDP-GlcN, UDP-2FGal, UDP-5SAra, GDP-Man, GDP-Fuc, UDP-Fuc or UDP-Rha. The protein is Anthocyanidin 3-O-glucosyltransferase UFGT of Vitis vinifera (Grape).